The sequence spans 380 residues: Cytochrome b (380 aa).

Transmembrane regions (helical) follow at residues 33–53 (FGSLLGICLITQIVTGLFLAM), 77–98 (WLIRSTHANGASLFFICIYLHV), 113–133 (WNIGVILLMLVMITAFVGYVL), and 178–198 (FFAFHFLLPFVISGASIIHLL). Residues H83 and H97 each coordinate heme b. Positions 182 and 196 each coordinate heme b. A ubiquinone is bound at residue H201. The next 4 helical transmembrane spans lie at 226–246 (YKDMLGFLITLTTLAFLTLFT), 288–308 (LGGVLALVSSILVLLLVPILH), 320–340 (ITQMLFWALVADMLILTWIGG), and 347–367 (FMTIGQIASITYFSLFLILIP).

Belongs to the cytochrome b family. As to quaternary structure, the cytochrome bc1 complex contains 3 respiratory subunits (MT-CYB, CYC1 and UQCRFS1), 2 core proteins (UQCRC1 and UQCRC2) and probably 6 low-molecular weight proteins. Requires heme b as cofactor.

The protein resides in the mitochondrion inner membrane. Functionally, component of the ubiquinol-cytochrome c reductase complex (complex III or cytochrome b-c1 complex) that is part of the mitochondrial respiratory chain. The b-c1 complex mediates electron transfer from ubiquinol to cytochrome c. Contributes to the generation of a proton gradient across the mitochondrial membrane that is then used for ATP synthesis. The sequence is that of Cytochrome b (mt-cyb) from Latimeria chalumnae (Coelacanth).